Consider the following 288-residue polypeptide: Phenazine biosynthesis-like domain-containing protein (288 aa).

The active site involves E46.

Belongs to the PhzF family. Interacts with UNRIP/MAWD.

The chain is Phenazine biosynthesis-like domain-containing protein (Pbld) from Rattus norvegicus (Rat).